Consider the following 24-residue polypeptide: Iron-regulated 31 kDa protein (24 aa).

Its subcellular location is the periplasm. In terms of biological role, may be involved in iron uptake. The sequence is that of Iron-regulated 31 kDa protein from Haemophilus influenzae.